The following is a 387-amino-acid chain: Glutamyl-tRNA reductase 1 (387 aa).

Residues 45 to 48 (TCNR), Ser-96, 101 to 103 (ETD), and Gln-107 each bind substrate. The Nucleophile role is filled by Cys-46. Residue 175–180 (GAGSVG) coordinates NADP(+).

It belongs to the glutamyl-tRNA reductase family. Homodimer.

The enzyme catalyses (S)-4-amino-5-oxopentanoate + tRNA(Glu) + NADP(+) = L-glutamyl-tRNA(Glu) + NADPH + H(+). The protein operates within porphyrin-containing compound metabolism; protoporphyrin-IX biosynthesis; 5-aminolevulinate from L-glutamyl-tRNA(Glu): step 1/2. Functionally, catalyzes the NADPH-dependent reduction of glutamyl-tRNA(Glu) to glutamate 1-semialdehyde (GSA). This Pyrobaculum arsenaticum (strain DSM 13514 / JCM 11321 / PZ6) protein is Glutamyl-tRNA reductase 1.